Consider the following 441-residue polypeptide: Protein arginine methyltransferase NDUFAF7, mitochondrial (441 aa).

The transit peptide at 1–46 (MNFLAAAGVRRLCAMRAVLPCLWRGKYFSSGNEPAENNTVTPMLRH) directs the protein to the mitochondrion. The disordered stretch occupies residues 415–434 (GRNHQTNARQSKPSPSPVAG). Residues 418–427 (HQTNARQSKP) show a composition bias toward polar residues.

Belongs to the NDUFAF7 family. In terms of assembly, interacts with NDUFS2.

Its subcellular location is the mitochondrion. The enzyme catalyses L-arginyl-[protein] + 2 S-adenosyl-L-methionine = N(omega),N(omega)'-dimethyl-L-arginyl-[protein] + 2 S-adenosyl-L-homocysteine + 2 H(+). Arginine methyltransferase involved in the assembly or stability of mitochondrial NADH:ubiquinone oxidoreductase complex (complex I). Acts by mediating symmetric dimethylation of 'Arg-118' of NDUFS2 after it assembles into the complex I, stabilizing the early intermediate complex. This Bos taurus (Bovine) protein is Protein arginine methyltransferase NDUFAF7, mitochondrial.